The chain runs to 310 residues: Coproporphyrin III ferrochelatase (310 aa).

Fe-coproporphyrin III is bound by residues Tyr13, Arg30, 46–47, Ser54, and Tyr125; that span reads RY. His183 and Glu264 together coordinate Fe(2+).

The protein belongs to the ferrochelatase family.

Its subcellular location is the cytoplasm. It catalyses the reaction Fe-coproporphyrin III + 2 H(+) = coproporphyrin III + Fe(2+). It participates in porphyrin-containing compound metabolism; protoheme biosynthesis. Involved in coproporphyrin-dependent heme b biosynthesis. Catalyzes the insertion of ferrous iron into coproporphyrin III to form Fe-coproporphyrin III. The sequence is that of Coproporphyrin III ferrochelatase from Geobacillus sp. (strain WCH70).